An 866-amino-acid polypeptide reads, in one-letter code: Thiamine diphosphate dependent-3-acetyloctanal synthase PigD (866 aa).

The tract at residues 826–866 is disordered; sequence KGWQRDPSDREALQERKDWAARQPESTSTSFDQGQNKEAIS. Positions 828-845 are enriched in basic and acidic residues; the sequence is WQRDPSDREALQERKDWA. Polar residues predominate over residues 849-866; the sequence is PESTSTSFDQGQNKEAIS.

It belongs to the TPP enzyme family. It depends on thiamine diphosphate as a cofactor.

It carries out the reaction (2E)-octenal + pyruvate + H(+) = (S)-3-acetyloctanal + CO2. It participates in antibiotic biosynthesis; prodigiosin biosynthesis. In terms of biological role, involved in the biosynthesis of 2-methyl-3-n-amyl-pyrrole (MAP), one of the terminal products involved in the biosynthesis of the red antibiotic prodigiosin (Pig). Catalyzes the decarboxylation of pyruvate, followed by the modification of the resulting two-carbon fragment acetaldehyde at the C3 position of the 2-octenal (1,2-addition of acetaldehyde) giving 3-acetyloctanal. The protein is Thiamine diphosphate dependent-3-acetyloctanal synthase PigD of Serratia sp. (strain ATCC 39006) (Prodigiosinella confusarubida).